A 234-amino-acid polypeptide reads, in one-letter code: Leucyl/phenylalanyl-tRNA--protein transferase (234 aa).

Belongs to the L/F-transferase family.

It is found in the cytoplasm. It carries out the reaction N-terminal L-lysyl-[protein] + L-leucyl-tRNA(Leu) = N-terminal L-leucyl-L-lysyl-[protein] + tRNA(Leu) + H(+). The enzyme catalyses N-terminal L-arginyl-[protein] + L-leucyl-tRNA(Leu) = N-terminal L-leucyl-L-arginyl-[protein] + tRNA(Leu) + H(+). The catalysed reaction is L-phenylalanyl-tRNA(Phe) + an N-terminal L-alpha-aminoacyl-[protein] = an N-terminal L-phenylalanyl-L-alpha-aminoacyl-[protein] + tRNA(Phe). Functions in the N-end rule pathway of protein degradation where it conjugates Leu, Phe and, less efficiently, Met from aminoacyl-tRNAs to the N-termini of proteins containing an N-terminal arginine or lysine. The polypeptide is Leucyl/phenylalanyl-tRNA--protein transferase (Escherichia coli O157:H7 (strain EC4115 / EHEC)).